Here is a 249-residue protein sequence, read N- to C-terminus: Putative S-adenosyl-L-methionine-dependent methyltransferase Mkms_0592 (249 aa).

S-adenosyl-L-methionine-binding positions include D111 and 141 to 142; that span reads DL.

Belongs to the UPF0677 family.

Its function is as follows. Exhibits S-adenosyl-L-methionine-dependent methyltransferase activity. This Mycobacterium sp. (strain KMS) protein is Putative S-adenosyl-L-methionine-dependent methyltransferase Mkms_0592.